A 128-amino-acid polypeptide reads, in one-letter code: Ribonuclease P protein component (128 aa).

The protein belongs to the RnpA family. In terms of assembly, consists of a catalytic RNA component (M1 or rnpB) and a protein subunit.

The enzyme catalyses Endonucleolytic cleavage of RNA, removing 5'-extranucleotides from tRNA precursor.. RNaseP catalyzes the removal of the 5'-leader sequence from pre-tRNA to produce the mature 5'-terminus. It can also cleave other RNA substrates such as 4.5S RNA. The protein component plays an auxiliary but essential role in vivo by binding to the 5'-leader sequence and broadening the substrate specificity of the ribozyme. The sequence is that of Ribonuclease P protein component from Parasynechococcus marenigrum (strain WH8102).